Here is a 257-residue protein sequence, read N- to C-terminus: Nickel import system ATP-binding protein NikD (257 aa).

Residues 4 to 245 form the ABC transporter domain; sequence IDIQNLTIKN…HLHPYTERLI (242 aa). 37 to 44 contributes to the ATP binding site; sequence GESGAGKS.

This sequence belongs to the ABC transporter superfamily. As to quaternary structure, the complex is composed of two ATP-binding proteins (NikD and NikE), two transmembrane proteins (NikB and NikC) and a solute-binding protein (NikA).

The protein resides in the cell membrane. It carries out the reaction Ni(2+)(out) + ATP + H2O = Ni(2+)(in) + ADP + phosphate + H(+). Part of the ABC transporter complex NikABCDE (Opp2) involved in nickel import. Probably responsible for energy coupling to the transport system. In Staphylococcus aureus (strain MRSA252), this protein is Nickel import system ATP-binding protein NikD.